A 216-amino-acid chain; its full sequence is Cobalt-zinc-cadmium resistance protein CzcN (216 aa).

Transmembrane regions (helical) follow at residues 27 to 47, 50 to 70, and 116 to 136; these read IGVW…GHSR, GTWV…LATV, and ESLA…PAVI.

The protein to A.xylosoxydans NccN.

It localises to the cell inner membrane. Functionally, component of the CZC cation-efflux system that confers resistance to cobalt, zinc and cadmium. This is Cobalt-zinc-cadmium resistance protein CzcN (czcN) from Cupriavidus metallidurans (strain ATCC 43123 / DSM 2839 / NBRC 102507 / CH34) (Ralstonia metallidurans).